A 145-amino-acid polypeptide reads, in one-letter code: MRQTFMANESNIERKWYVIDAAGQTLGRLSSEVASILRGKHKATYTPHVDSGDYVIIINAGQIEMTGKKASDKVYYRHSNYPGGIKSITAGELREKNPERLLEISIKGMLPSSRLGEKQGKKLFVYGGAEHPHAAQQPENYELRG.

The protein belongs to the universal ribosomal protein uL13 family. As to quaternary structure, part of the 50S ribosomal subunit.

Functionally, this protein is one of the early assembly proteins of the 50S ribosomal subunit, although it is not seen to bind rRNA by itself. It is important during the early stages of 50S assembly. The chain is Large ribosomal subunit protein uL13 from Staphylococcus carnosus (strain TM300).